The following is a 792-amino-acid chain: Leucine--tRNA ligase (792 aa).

Positions 39–50 (PYPSAAGLHLGH) match the 'HIGH' region motif. A 'KMSKS' region motif is present at residues 569–573 (KMSKS). Lysine 572 serves as a coordination point for ATP.

It belongs to the class-I aminoacyl-tRNA synthetase family.

The protein resides in the cytoplasm. The enzyme catalyses tRNA(Leu) + L-leucine + ATP = L-leucyl-tRNA(Leu) + AMP + diphosphate. This Mycoplasma genitalium (strain ATCC 33530 / DSM 19775 / NCTC 10195 / G37) (Mycoplasmoides genitalium) protein is Leucine--tRNA ligase.